A 308-amino-acid chain; its full sequence is Ribosomal RNA small subunit methyltransferase H (308 aa).

Residues 34-36, D54, F85, D99, and Q106 each bind S-adenosyl-L-methionine; that span reads GGH.

Belongs to the methyltransferase superfamily. RsmH family.

The protein resides in the cytoplasm. The catalysed reaction is cytidine(1402) in 16S rRNA + S-adenosyl-L-methionine = N(4)-methylcytidine(1402) in 16S rRNA + S-adenosyl-L-homocysteine + H(+). Specifically methylates the N4 position of cytidine in position 1402 (C1402) of 16S rRNA. The chain is Ribosomal RNA small subunit methyltransferase H from Dichelobacter nodosus (strain VCS1703A).